Consider the following 251-residue polypeptide: uncharacterized protein (251 aa).

It belongs to the FAM243 family.

This is an uncharacterized protein from Homo sapiens (Human).